Consider the following 263-residue polypeptide: 4-hydroxy-tetrahydrodipicolinate reductase (263 aa).

Residues 7–12 (GFKGRM), 96–98 (GTT), and 122–125 (APNF) each bind NAD(+). His152 acts as the Proton donor/acceptor in catalysis. His153 serves as a coordination point for (S)-2,3,4,5-tetrahydrodipicolinate. The Proton donor role is filled by Lys156. Residue 162–163 (GT) participates in (S)-2,3,4,5-tetrahydrodipicolinate binding.

It belongs to the DapB family.

It is found in the cytoplasm. It carries out the reaction (S)-2,3,4,5-tetrahydrodipicolinate + NAD(+) + H2O = (2S,4S)-4-hydroxy-2,3,4,5-tetrahydrodipicolinate + NADH + H(+). It catalyses the reaction (S)-2,3,4,5-tetrahydrodipicolinate + NADP(+) + H2O = (2S,4S)-4-hydroxy-2,3,4,5-tetrahydrodipicolinate + NADPH + H(+). The protein operates within amino-acid biosynthesis; L-lysine biosynthesis via DAP pathway; (S)-tetrahydrodipicolinate from L-aspartate: step 4/4. Functionally, catalyzes the conversion of 4-hydroxy-tetrahydrodipicolinate (HTPA) to tetrahydrodipicolinate. This Listeria monocytogenes serotype 4b (strain CLIP80459) protein is 4-hydroxy-tetrahydrodipicolinate reductase.